The following is a 197-amino-acid chain: MDFQSRILGHFNASIDAKTYASEVLPPFIEVASQMMVQCLVSEGKILACGNGGSAGDSQHFSSELLNRFERERPSLPALALTTDTSTLTSIANDYSYNEIFSKQIRALGQPGDILLAISTSGNSANVVQAIQAAHDRDMHIVALTGRDGGDMASLLGQDDCEIRVPSTSTARIQEVHLLAIHCLCDLIDQQLFGSTE.

An SIS domain is found at 36–197; that stretch reads MVQCLVSEGK…IDQQLFGSTE (162 aa). Substrate is bound at residue 51 to 53; it reads NGG. Residues His-60 and Glu-64 each contribute to the Zn(2+) site. Substrate-binding positions include Glu-64, 93–94, 119–121, Ser-124, and Gln-174; these read ND and STS. Gln-174 and His-182 together coordinate Zn(2+).

Belongs to the SIS family. GmhA subfamily. Homotetramer. Requires Zn(2+) as cofactor.

It is found in the cytoplasm. The enzyme catalyses 2 D-sedoheptulose 7-phosphate = D-glycero-alpha-D-manno-heptose 7-phosphate + D-glycero-beta-D-manno-heptose 7-phosphate. It participates in carbohydrate biosynthesis; D-glycero-D-manno-heptose 7-phosphate biosynthesis; D-glycero-alpha-D-manno-heptose 7-phosphate and D-glycero-beta-D-manno-heptose 7-phosphate from sedoheptulose 7-phosphate: step 1/1. Functionally, catalyzes the isomerization of sedoheptulose 7-phosphate in D-glycero-D-manno-heptose 7-phosphate. The sequence is that of Phosphoheptose isomerase from Chromohalobacter salexigens (strain ATCC BAA-138 / DSM 3043 / CIP 106854 / NCIMB 13768 / 1H11).